We begin with the raw amino-acid sequence, 138 residues long: Transposon Tn10 TetD protein (138 aa).

An HTH araC/xylS-type domain is found at 31 to 129; the sequence is KDVLLWIEHN…KVTPSYYRRN (99 aa). 2 DNA-binding regions (H-T-H motif) span residues 48–69 and 96–119; these read DDVA…KKVT and ILEI…KYIF.

This Escherichia coli protein is Transposon Tn10 TetD protein (tetD).